A 198-amino-acid polypeptide reads, in one-letter code: MVDDEKREVSEEIEEALKKLHLDDVDWARALSPHEILYLLDRCPFLQIVSTNEIEAFSETKFITAQSGWTIHHYGEAMSSSPGPLLFQGGDYRILGDDDEGDDGEGGTIVNPGKGTIVKQAFTTAAEMIALAQKSGWRGVRIIDGHPLMQWAAWMQATDDAFHLEGYEPDEKARKKRERVKRSEVEDQLKINVKPTRR.

Residues 166–198 (GYEPDEKARKKRERVKRSEVEDQLKINVKPTRR) are disordered.

This is an uncharacterized protein from Coxiella burnetii (strain RSA 493 / Nine Mile phase I).